The following is a 444-amino-acid chain: Trigger factor (444 aa).

The PPIase FKBP-type domain maps to Asp-160–Pro-245.

This sequence belongs to the FKBP-type PPIase family. Tig subfamily.

The protein resides in the cytoplasm. The enzyme catalyses [protein]-peptidylproline (omega=180) = [protein]-peptidylproline (omega=0). Functionally, involved in protein export. Acts as a chaperone by maintaining the newly synthesized protein in an open conformation. Functions as a peptidyl-prolyl cis-trans isomerase. The sequence is that of Trigger factor from Acinetobacter baumannii (strain AB0057).